A 209-amino-acid chain; its full sequence is Uracil phosphoribosyltransferase (209 aa).

Residues Arg79, Arg104, and 131-139 (DPMLATGGS) contribute to the 5-phospho-alpha-D-ribose 1-diphosphate site. Uracil contacts are provided by residues Ile194 and 199–201 (GDA). 5-phospho-alpha-D-ribose 1-diphosphate is bound at residue Asp200.

The protein belongs to the UPRTase family. Mg(2+) serves as cofactor.

The enzyme catalyses UMP + diphosphate = 5-phospho-alpha-D-ribose 1-diphosphate + uracil. It participates in pyrimidine metabolism; UMP biosynthesis via salvage pathway; UMP from uracil: step 1/1. Its activity is regulated as follows. Allosterically activated by GTP. Catalyzes the conversion of uracil and 5-phospho-alpha-D-ribose 1-diphosphate (PRPP) to UMP and diphosphate. The protein is Uracil phosphoribosyltransferase of Streptococcus pyogenes serotype M1.